The following is a 185-amino-acid chain: Phospholipase A2 inhibitor 25 kDa subunit (185 aa).

Cystine bridges form between cysteine 3–cysteine 27, cysteine 6–cysteine 13, cysteine 20–cysteine 48, cysteine 54–cysteine 75, cysteine 76–cysteine 81, cysteine 101–cysteine 126, cysteine 119–cysteine 146, and cysteine 152–cysteine 172.

This sequence belongs to the CNF-like-inhibitor family. As to quaternary structure, heterodimer with phospholipase A2 inhibitor 31 kDa. In terms of tissue distribution, expressed by the liver.

The protein localises to the secreted. In terms of biological role, inhibits the enzymatic activity of phospholipase A2. In Naja kaouthia (Monocled cobra), this protein is Phospholipase A2 inhibitor 25 kDa subunit.